The chain runs to 354 residues: Homeobox-leucine zipper protein HOX27 (354 aa).

The segment at 98-175 (SVAAGAPGME…DDEGASARKK (78 aa)) is disordered. Residues 148–157 (QGGGGGGGGE) are compositionally biased toward gly residues. The homeobox DNA-binding region spans 171-230 (SARKKLRLSKEQSAFLEESFKEHSTLNPKQKVALAKQLNLRPRQVEVWFQNRRARTKLKQ). The tract at residues 229-273 (KQTEVDCEYLKRCCETLTEENRRLHKELAELRALKTARPFYMHLP) is leucine-zipper. Residues 294–323 (STSAPAAATSPAAAPTAAARTAVASPEPHR) form a disordered region.

It belongs to the HD-ZIP homeobox family. Class II subfamily. Expressed in seedlings, roots, stems, leaf sheaths and blades and panicles.

Its subcellular location is the nucleus. Functionally, probable transcription factor. The polypeptide is Homeobox-leucine zipper protein HOX27 (HOX27) (Oryza sativa subsp. japonica (Rice)).